Reading from the N-terminus, the 253-residue chain is MTEFVVLIPARLDSSRLPGKALADIHGKPMVVRVAEQAAKSKAARVVVATDHPDIQTACQAHGIEVVMTSNRHESGTTRLAEASVALKLPPHLIVVNVQGDEPLIAPELIDRTAEVLVENNVQMATAAHELHDFDELMNPNAVKVVLDKNRNAIYFSRAPIPYPRDAIRAGKREMPSETAVLRHIGIYAYRAGFLQRYAEMSVSPLETIESLEQLRVLWHGYPIAVETAKEAPAAGVDTQEDLDRVRAVFQTV.

It belongs to the KdsB family.

The protein localises to the cytoplasm. It carries out the reaction 3-deoxy-alpha-D-manno-oct-2-ulosonate + CTP = CMP-3-deoxy-beta-D-manno-octulosonate + diphosphate. Its pathway is nucleotide-sugar biosynthesis; CMP-3-deoxy-D-manno-octulosonate biosynthesis; CMP-3-deoxy-D-manno-octulosonate from 3-deoxy-D-manno-octulosonate and CTP: step 1/1. The protein operates within bacterial outer membrane biogenesis; lipopolysaccharide biosynthesis. Activates KDO (a required 8-carbon sugar) for incorporation into bacterial lipopolysaccharide in Gram-negative bacteria. This Neisseria meningitidis serogroup B (strain ATCC BAA-335 / MC58) protein is 3-deoxy-manno-octulosonate cytidylyltransferase.